The following is a 188-amino-acid chain: dCTP deaminase (188 aa).

DCTP-binding positions include 111–116 (KSTYAR), 135–137 (TLE), Gln156, Tyr170, Lys179, and Gln180. Glu137 (proton donor/acceptor) is an active-site residue.

The protein belongs to the dCTP deaminase family. Homotrimer.

The catalysed reaction is dCTP + H2O + H(+) = dUTP + NH4(+). Its pathway is pyrimidine metabolism; dUMP biosynthesis; dUMP from dCTP (dUTP route): step 1/2. Catalyzes the deamination of dCTP to dUTP. The protein is dCTP deaminase of Orientia tsutsugamushi (strain Boryong) (Rickettsia tsutsugamushi).